We begin with the raw amino-acid sequence, 344 residues long: AGDASSGFFRAVADGCPITHTSCSAPHRRLTKVSVIGAGNVGMAIAQTILTQNLADEIALVDALPDKLRGEALDLQHAAAFLPRVRIVSGTDAAVTKNSDLIVVTAGARQIPGETRLNLLQRNVALYRKIVPPVAEHSPDALLLVVSNPVDVLTYVAWKLSGFPASRVIGSGTNLDSSRFRFLVAEHLDVSAQDVQAYMVGEHGDSSVAIWSSISVGGMPALKSLRDSHRSFDEAALEGIRRAVVGGAYEVIGLKGYTSWAIGYSVASLATSLLRDQRRVHPVSVLAAGFHGISDGHEVFLSLPARLGRAGVLGVAEMDLTEAEAAQLRRSAKTLWENCQLLGL.

NAD(+)-binding positions include Asp62–Lys67 and Arg109. 3 residues coordinate substrate: Arg116, Asn148, and Arg179. Asn148 provides a ligand contact to NAD(+). Residue His203 is the Proton acceptor of the active site. Thr258 contributes to the substrate binding site.

It belongs to the LDH/MDH superfamily. LDH family. In terms of assembly, tetramer that arise from random association of LDH-A and LDH-B.

The catalysed reaction is (S)-lactate + NAD(+) = pyruvate + NADH + H(+). The protein operates within fermentation; pyruvate fermentation to lactate; (S)-lactate from pyruvate: step 1/1. The protein is L-lactate dehydrogenase B of Hordeum vulgare (Barley).